We begin with the raw amino-acid sequence, 150 residues long: Probable antibacterial peptide (150 aa).

Positions 1–19 are cleaved as a signal peptide; the sequence is MHIARFCLLSSMAVLALSA.

It is found in the secreted. Functionally, has antibacterial activity in vitro. This is Probable antibacterial peptide from Riptortus clavatus (Bean bug).